Reading from the N-terminus, the 414-residue chain is Serine--tRNA ligase (414 aa).

Residue 230 to 232 (TSE) participates in L-serine binding. 261-263 (RQE) provides a ligand contact to ATP. L-serine is bound at residue glutamate 284. 348–351 (EISS) contacts ATP. Serine 382 contacts L-serine.

The protein belongs to the class-II aminoacyl-tRNA synthetase family. Type-1 seryl-tRNA synthetase subfamily. In terms of assembly, homodimer. The tRNA molecule binds across the dimer.

Its subcellular location is the cytoplasm. It catalyses the reaction tRNA(Ser) + L-serine + ATP = L-seryl-tRNA(Ser) + AMP + diphosphate + H(+). It carries out the reaction tRNA(Sec) + L-serine + ATP = L-seryl-tRNA(Sec) + AMP + diphosphate + H(+). It functions in the pathway aminoacyl-tRNA biosynthesis; selenocysteinyl-tRNA(Sec) biosynthesis; L-seryl-tRNA(Sec) from L-serine and tRNA(Sec): step 1/1. Catalyzes the attachment of serine to tRNA(Ser). Is also able to aminoacylate tRNA(Sec) with serine, to form the misacylated tRNA L-seryl-tRNA(Sec), which will be further converted into selenocysteinyl-tRNA(Sec). This Campylobacter fetus subsp. fetus (strain 82-40) protein is Serine--tRNA ligase.